Here is a 258-residue protein sequence, read N- to C-terminus: Imidazole glycerol phosphate synthase subunit HisF (258 aa).

Active-site residues include Asp11 and Asp130.

It belongs to the HisA/HisF family. In terms of assembly, heterodimer of HisH and HisF.

The protein localises to the cytoplasm. The catalysed reaction is 5-[(5-phospho-1-deoxy-D-ribulos-1-ylimino)methylamino]-1-(5-phospho-beta-D-ribosyl)imidazole-4-carboxamide + L-glutamine = D-erythro-1-(imidazol-4-yl)glycerol 3-phosphate + 5-amino-1-(5-phospho-beta-D-ribosyl)imidazole-4-carboxamide + L-glutamate + H(+). The protein operates within amino-acid biosynthesis; L-histidine biosynthesis; L-histidine from 5-phospho-alpha-D-ribose 1-diphosphate: step 5/9. IGPS catalyzes the conversion of PRFAR and glutamine to IGP, AICAR and glutamate. The HisF subunit catalyzes the cyclization activity that produces IGP and AICAR from PRFAR using the ammonia provided by the HisH subunit. This chain is Imidazole glycerol phosphate synthase subunit HisF, found in Prochlorococcus marinus (strain MIT 9211).